Reading from the N-terminus, the 640-residue chain is Chaperone protein HtpG (640 aa).

The interval 1-343 (MQTAENVEHL…SNDLPLNVSR (343 aa)) is a; substrate-binding. The tract at residues 344 to 564 (EILQESKDID…THDMSGNLGR (221 aa)) is b. Positions 565-640 (LLKSAGQKVP…LLLQNILSGK (76 aa)) are c.

Belongs to the heat shock protein 90 family. Homodimer.

The protein localises to the cytoplasm. Its function is as follows. Molecular chaperone. Has ATPase activity. This chain is Chaperone protein HtpG, found in Nitrosomonas eutropha (strain DSM 101675 / C91 / Nm57).